The sequence spans 144 residues: 3-dehydroquinate dehydratase (144 aa).

Catalysis depends on Y22, which acts as the Proton acceptor. Positions 73, 79, and 86 each coordinate substrate. Catalysis depends on H99, which acts as the Proton donor. Residues 100 to 101 and R110 contribute to the substrate site; that span reads LS.

Belongs to the type-II 3-dehydroquinase family. Homododecamer.

The enzyme catalyses 3-dehydroquinate = 3-dehydroshikimate + H2O. It functions in the pathway metabolic intermediate biosynthesis; chorismate biosynthesis; chorismate from D-erythrose 4-phosphate and phosphoenolpyruvate: step 3/7. Catalyzes a trans-dehydration via an enolate intermediate. In Herpetosiphon aurantiacus (strain ATCC 23779 / DSM 785 / 114-95), this protein is 3-dehydroquinate dehydratase.